A 605-amino-acid polypeptide reads, in one-letter code: Aspartate--tRNA(Asp/Asn) ligase (605 aa).

Glu-183 is a binding site for L-aspartate. The segment at 207 to 210 (QLFK) is aspartate. Arg-229 is an L-aspartate binding site. Residues 229-231 (RDE) and Gln-238 each bind ATP. His-457 lines the L-aspartate pocket. Glu-497 is a binding site for ATP. Arg-504 lines the L-aspartate pocket. Residue 549–552 (GLDR) participates in ATP binding.

Belongs to the class-II aminoacyl-tRNA synthetase family. Type 1 subfamily. Homodimer.

It is found in the cytoplasm. It carries out the reaction tRNA(Asx) + L-aspartate + ATP = L-aspartyl-tRNA(Asx) + AMP + diphosphate. Aspartyl-tRNA synthetase with relaxed tRNA specificity since it is able to aspartylate not only its cognate tRNA(Asp) but also tRNA(Asn). Reaction proceeds in two steps: L-aspartate is first activated by ATP to form Asp-AMP and then transferred to the acceptor end of tRNA(Asp/Asn). This is Aspartate--tRNA(Asp/Asn) ligase from Persephonella marina (strain DSM 14350 / EX-H1).